The primary structure comprises 186 residues: Elongation factor P (186 aa).

Belongs to the elongation factor P family.

It localises to the cytoplasm. It functions in the pathway protein biosynthesis; polypeptide chain elongation. Functionally, involved in peptide bond synthesis. Stimulates efficient translation and peptide-bond synthesis on native or reconstituted 70S ribosomes in vitro. Probably functions indirectly by altering the affinity of the ribosome for aminoacyl-tRNA, thus increasing their reactivity as acceptors for peptidyl transferase. The protein is Elongation factor P of Synechococcus sp. (strain CC9902).